A 122-amino-acid polypeptide reads, in one-letter code: Large ribosomal subunit protein uL14 (122 aa).

Belongs to the universal ribosomal protein uL14 family. As to quaternary structure, part of the 50S ribosomal subunit. Forms a cluster with proteins L3 and L19. In the 70S ribosome, L14 and L19 interact and together make contacts with the 16S rRNA in bridges B5 and B8.

Functionally, binds to 23S rRNA. Forms part of two intersubunit bridges in the 70S ribosome. The sequence is that of Large ribosomal subunit protein uL14 from Exiguobacterium sibiricum (strain DSM 17290 / CCUG 55495 / CIP 109462 / JCM 13490 / 255-15).